A 428-amino-acid polypeptide reads, in one-letter code: Chaperone SurA (428 aa).

An N-terminal signal peptide occupies residues 1–13; sequence MLGALLLSGAVHA. PpiC domains lie at 164-265 and 276-375; these read SEEF…KLLE and RDEV…EVLG. A disordered region spans residues 211–230; it reads TSSSSENALEGGDMGWRKAA.

The protein resides in the periplasm. The catalysed reaction is [protein]-peptidylproline (omega=180) = [protein]-peptidylproline (omega=0). Functionally, chaperone involved in the correct folding and assembly of outer membrane proteins. Recognizes specific patterns of aromatic residues and the orientation of their side chains, which are found more frequently in integral outer membrane proteins. May act in both early periplasmic and late outer membrane-associated steps of protein maturation. The polypeptide is Chaperone SurA (Pseudomonas syringae pv. syringae (strain B728a)).